We begin with the raw amino-acid sequence, 363 residues long: Probable endopolygalacturonase B (363 aa).

The signal sequence occupies residues 1–20 (MQLLQSSVIAATVGAALVAA). Positions 21 to 28 (VPVELEAR) are excised as a propeptide. Cys31 and Cys46 are oxidised to a cystine. PbH1 repeat units follow at residues 158–187 (SDNLNITDVTIDNSAGTAEGHNTDAFDVGS), 188–209 (STYINIDGATVYNQDDCLAINS), 210–230 (GSHITFTNGYCDGGHGLSIGS), 239–260 (VEDVTISNSKVVNSQNGVRIKT), 268–290 (VSNVKFEDITLSGITKYGLIVEQ), and 302–347 (TNGI…SITG). N-linked (GlcNAc...) asparagine glycosylation is present at Asn162. Asp202 acts as the Proton donor in catalysis. Cys204 and Cys220 are disulfide-bonded. Residue His224 is part of the active site. 2 disulfides stabilise this stretch: Cys330-Cys335 and Cys354-Cys363.

The protein belongs to the glycosyl hydrolase 28 family.

Its subcellular location is the secreted. It catalyses the reaction (1,4-alpha-D-galacturonosyl)n+m + H2O = (1,4-alpha-D-galacturonosyl)n + (1,4-alpha-D-galacturonosyl)m.. Functionally, involved in maceration and soft-rotting of plant tissue. Hydrolyzes the 1,4-alpha glycosidic bonds of de-esterified pectate in the smooth region of the plant cell wall. In Aspergillus flavus (strain ATCC 200026 / FGSC A1120 / IAM 13836 / NRRL 3357 / JCM 12722 / SRRC 167), this protein is Probable endopolygalacturonase B (pgaB).